Reading from the N-terminus, the 166-residue chain is Disulfide bond formation protein B (166 aa).

The Cytoplasmic portion of the chain corresponds to 1–11 (MQSFAFSTRAL). The chain crosses the membrane as a helical span at residues 12–28 (FLGLFAVCAGLLGFGLY). At 29–46 (LQHAVGLEPCPMCIMQRY) the chain is on the periplasmic side. A disulfide bond links Cys-38 and Cys-41. Residues 47-63 (AFVAIALTALVAGLHGP) form a helical membrane-spanning segment. The Cytoplasmic segment spans residues 64 to 70 (GRRGTRA). Residues 71 to 87 (YAAVILLLALAGGGVAL) form a helical membrane-spanning segment. Residues 88–143 (RQTWMQLYPPEFAECGPDLEFMLGSFPLADALPMIFQGAGDCSKVDWAFLGLSIAN) lie on the Periplasmic side of the membrane. A disulfide bridge links Cys-102 with Cys-129. A helical membrane pass occupies residues 144–162 (WSLVCLTLVAVFAIMMIAR). Over 163–166 (KRGG) the chain is Cytoplasmic.

It belongs to the DsbB family.

The protein localises to the cell inner membrane. Required for disulfide bond formation in some periplasmic proteins. Acts by oxidizing the DsbA protein. The protein is Disulfide bond formation protein B of Aromatoleum aromaticum (strain DSM 19018 / LMG 30748 / EbN1) (Azoarcus sp. (strain EbN1)).